The following is a 620-amino-acid chain: Bicaudal D-related protein homolog (620 aa).

Over residues 23–41 the composition is skewed to low complexity; sequence NNNNNSIVGGSSSSSSGGN. Residues 23-53 form a disordered region; it reads NNNNNSIVGGSSSSSSGGNKSKRPRQFGQYS. Coiled coils occupy residues 120–331 and 461–575; these read AAEL…LSER and VLEQ…LIDE. Basic and acidic residues-rich tracts occupy residues 493 to 503 and 509 to 528; these read KEERDQARGDL and RDELLSKAQTERDAANDRRT. The segment at 493–528 is disordered; that stretch reads KEERDQARGDLEDNTDRDELLSKAQTERDAANDRRT.

The protein belongs to the BICDR family. In terms of assembly, may homodimerize but does not interact with BicD. May interact with eEF1gamma; The interaction is probably indirect.

In terms of biological role, functions redundantly with BicD. Involved in formation and/or development of mechanosensory organs during metamorphosis. During macrochaetae development, together with BicD, involved in Rab 6 and Spn-F stability and distribution and actin cytoskeleton organization. This chain is Bicaudal D-related protein homolog, found in Drosophila melanogaster (Fruit fly).